A 329-amino-acid chain; its full sequence is Ketol-acid reductoisomerase (NADP(+)) (329 aa).

In terms of domain architecture, KARI N-terminal Rossmann spans M2–T181. NADP(+) is bound by residues Y25–Q28, R48, S52, and D82–Q85. H107 is an active-site residue. NADP(+) is bound at residue G133. The region spanning T182 to F327 is the KARI C-terminal knotted domain. 4 residues coordinate Mg(2+): D190, E194, E226, and E230. S251 contacts substrate.

The protein belongs to the ketol-acid reductoisomerase family. Requires Mg(2+) as cofactor.

It carries out the reaction (2R)-2,3-dihydroxy-3-methylbutanoate + NADP(+) = (2S)-2-acetolactate + NADPH + H(+). The catalysed reaction is (2R,3R)-2,3-dihydroxy-3-methylpentanoate + NADP(+) = (S)-2-ethyl-2-hydroxy-3-oxobutanoate + NADPH + H(+). Its pathway is amino-acid biosynthesis; L-isoleucine biosynthesis; L-isoleucine from 2-oxobutanoate: step 2/4. It functions in the pathway amino-acid biosynthesis; L-valine biosynthesis; L-valine from pyruvate: step 2/4. Its function is as follows. Involved in the biosynthesis of branched-chain amino acids (BCAA). Catalyzes an alkyl-migration followed by a ketol-acid reduction of (S)-2-acetolactate (S2AL) to yield (R)-2,3-dihydroxy-isovalerate. In the isomerase reaction, S2AL is rearranged via a Mg-dependent methyl migration to produce 3-hydroxy-3-methyl-2-ketobutyrate (HMKB). In the reductase reaction, this 2-ketoacid undergoes a metal-dependent reduction by NADPH to yield (R)-2,3-dihydroxy-isovalerate. The polypeptide is Ketol-acid reductoisomerase (NADP(+)) (Methanoregula boonei (strain DSM 21154 / JCM 14090 / 6A8)).